A 256-amino-acid chain; its full sequence is Low molecular mass lipoprotein 3 (256 aa).

The first 17 residues, 1–17 (MKPAIVILCLFVASLYA), serve as a signal peptide directing secretion.

This sequence belongs to the 30 kDa lipoprotein family. Detected in larval hemolymph (at protein level).

It localises to the secreted. This is Low molecular mass lipoprotein 3 from Bombyx mori (Silk moth).